We begin with the raw amino-acid sequence, 99 residues long: Protein S100-A11 (99 aa).

Met1 bears the N-acetylmethionine mark. Thr8 is modified (phosphothreonine). EF-hand domains lie at 10 to 47 and 53 to 88; these read RCIESLIAIFQKHAGRDGNNTKISKTEFLIFMNTELAA and KDPGVLDRMMKKLDLDSDGQLDFQEFLNLIGGLAIA. Asn29, Lys31, Glu36, Asp66, Asp68, Asp70, Gln72, and Glu77 together coordinate Ca(2+).

The protein belongs to the S-100 family. As to quaternary structure, homodimer; disulfide-linked. Post-translationally, phosphorylation at Thr-8 significantly suppresses homodimerization and promotes association with NCL/nucleolin which induces nuclear translocation.

Its subcellular location is the cytoplasm. It is found in the nucleus. Its function is as follows. Facilitates the differentiation and the cornification of keratinocytes. This chain is Protein S100-A11 (S100A11), found in Sus scrofa (Pig).